Consider the following 1403-residue polypeptide: DNA-directed RNA polymerase subunit beta' (1403 aa).

4 residues coordinate Zn(2+): Cys71, Cys73, Cys86, and Cys89. Mg(2+) contacts are provided by Asp462, Asp464, and Asp466. Zn(2+) is bound by residues Cys811, Cys885, Cys892, and Cys895.

This sequence belongs to the RNA polymerase beta' chain family. The RNAP catalytic core consists of 2 alpha, 1 beta, 1 beta' and 1 omega subunit. When a sigma factor is associated with the core the holoenzyme is formed, which can initiate transcription. Mg(2+) is required as a cofactor. It depends on Zn(2+) as a cofactor.

The enzyme catalyses RNA(n) + a ribonucleoside 5'-triphosphate = RNA(n+1) + diphosphate. Its function is as follows. DNA-dependent RNA polymerase catalyzes the transcription of DNA into RNA using the four ribonucleoside triphosphates as substrates. The sequence is that of DNA-directed RNA polymerase subunit beta' from Bartonella tribocorum (strain CIP 105476 / IBS 506).